A 345-amino-acid polypeptide reads, in one-letter code: Tryptophan--tRNA ligase (345 aa).

ATP contacts are provided by residues 21–23 and 30–31; these read QPT and GN. The short motif at 22-31 is the 'HIGH' region element; the sequence is PTADSYHLGN. Asp-147 contacts L-tryptophan. Residues 159 to 161, Ile-198, and 207 to 211 each bind ATP; these read GED and KMSKS. The 'KMSKS' region motif lies at 207–211; the sequence is KMSKS.

The protein belongs to the class-I aminoacyl-tRNA synthetase family. As to quaternary structure, homodimer.

Its subcellular location is the cytoplasm. The catalysed reaction is tRNA(Trp) + L-tryptophan + ATP = L-tryptophyl-tRNA(Trp) + AMP + diphosphate + H(+). Its function is as follows. Catalyzes the attachment of tryptophan to tRNA(Trp). The polypeptide is Tryptophan--tRNA ligase (Corynebacterium glutamicum (strain ATCC 13032 / DSM 20300 / JCM 1318 / BCRC 11384 / CCUG 27702 / LMG 3730 / NBRC 12168 / NCIMB 10025 / NRRL B-2784 / 534)).